Reading from the N-terminus, the 107-residue chain is EIVLTQSPAITAASLGQKVTITCSASSSVSYMHWYQQKSGTSPKPWIYEISKLASGVPARFSGSGSGTSYSLTISSMEAEDAAIYYCQQWNYPLITFGGGTKLEIKR.

Positions Glu1–Cys23 are framework-1. Cys23 and Cys87 are disulfide-bonded. The complementarity-determining-1 stretch occupies residues Ser24 to His33. The framework-2 stretch occupies residues Trp34–Tyr48. A complementarity-determining-2 region spans residues Glu49–Ser55. The tract at residues Gly56–Cys87 is framework-3. The interval Gln88–Thr96 is complementarity-determining-3. Residues Phe97–Lys106 form a framework-4 region.

The sequence is that of Ig kappa chain V-VI region SAPC 10 from Mus musculus (Mouse).